The primary structure comprises 653 residues: Probable sulfate transporter 3.4 (653 aa).

Residues 1–92 (MGHGTNRVED…QYDLKLLRSD (92 aa)) are Cytoplasmic-facing. A helical membrane pass occupies residues 93 to 113 (VISGLTIASLAIPQGISYAKL). Topologically, residues 114-115 (AN) are extracellular. The helical transmembrane segment at 116–136 (LPPIVGLYSSFVPPLIYAVLG) threads the bilayer. Residues 137 to 140 (SSRH) lie on the Cytoplasmic side of the membrane. A helical membrane pass occupies residues 141-161 (LAVGPVSIASLVMGSMLSESV). At 162-167 (SPTQDS) the chain is on the extracellular side. A helical transmembrane segment spans residues 168–188 (ILYLKLAFTSTFFAGVFQASL). At 189 to 194 (GLLRLG) the chain is on the cytoplasmic side. Residues 195-215 (FMIDFLSKATLIGFTAGAAVI) traverse the membrane as a helical segment. The Extracellular segment spans residues 216-247 (VSLQQLKGLLGIVHFTGKMQIVPVMSSVFNHR). The chain crosses the membrane as a helical span at residues 248–268 (SEWSWETIVMGIGFLSILLTT). At 269–279 (RHISMRKPKLF) the chain is on the cytoplasmic side. A helical transmembrane segment spans residues 280-300 (WISAASPLASVIISTLLVYLI). Residues 301–331 (RSKTHAISFIGHLPKGLNPPSLNMLYFSGAH) lie on the Extracellular side of the membrane. The chain crosses the membrane as a helical span at residues 332–352 (LALAIKTGIITGILSLTEGIA). The Cytoplasmic segment spans residues 353–370 (VGRTFASLKNYQVNGNKE). Residues 371 to 391 (MMAIGFMNMAGSCTSCYVTTG) traverse the membrane as a helical segment. At 392 to 407 (SFSRSAVNYNAGAKTA) the chain is on the extracellular side. A helical membrane pass occupies residues 408–428 (VSNIVMASAVLVTLLFLMPLF). The Cytoplasmic portion of the chain corresponds to 429–433 (YYTPN). Residues 434–454 (VILAAIILTAVIGLIDYQAAY) form a helical membrane-spanning segment. Topologically, residues 455-471 (KLWKVDKFDFFTCLCSF) are extracellular. The chain crosses the membrane as a helical span at residues 472-492 (FGVLFVSVPLGLAIAVAVSVI). At 493–653 (KILLHVTRPN…SSTWKANGQP (161 aa)) the chain is on the cytoplasmic side. The STAS domain maps to 520-643 (RYREASRIPG…LTVGEAVADL (124 aa)).

The protein belongs to the SLC26A/SulP transporter (TC 2.A.53) family.

It localises to the membrane. H(+)/sulfate cotransporter that may play a role in the regulation of sulfate assimilation. This Arabidopsis thaliana (Mouse-ear cress) protein is Probable sulfate transporter 3.4 (SULTR3;4).